The primary structure comprises 100 residues: CCAAT/enhancer-binding protein homolog 2 (100 aa).

Disordered stretches follow at residues 1–60 (MSGN…ETLE) and 79–100 (AYAK…SSAV). Positions 17–80 (EDDYSTKRKR…SFLKEMFMAY (64 aa)) constitute a bZIP domain. The segment at 23-48 (KRKRNNEAVNRTRQKKRQEENDTAEK) is basic motif. Positions 24–83 (RKRNNEAVNRTRQKKRQEENDTAEKVDELKKENETLERKVEQLQKELSFLKEMFMAYAKN) form a coiled coil. The span at 39–60 (RQEENDTAEKVDELKKENETLE) shows a compositional bias: basic and acidic residues. Residues 52–73 (LKKENETLERKVEQLQKELSFL) form a leucine-zipper region. Pro residues predominate over residues 88–100 (GPPPPPPPSSSAV).

The protein belongs to the bZIP family. C/EBP subfamily. In terms of assembly, interacts with transcription factor zip-11. In terms of tissue distribution, expressed broadly in somatic tissues including the intestine.

The protein resides in the nucleus. In terms of biological role, transcription factor that binds to the promoter and the enhancer regions of target genes. Regulates expression of genes involved in fat metabolism, including ech-1.1 and fat-5. Has a protective role in response to infection by the Gram-negative bacterium P.aeruginosa. Required for the activation of infection response gene irg-1 following P.aeruginosa infection. Required to prevent P.aeruginosa ToxA-mediated lethality. May also function in concert with transcription factor zip-11 to mediate immune responses, independently of the pmk-1/p38 MAPK pathway. May act together with the bZIP transcription factor, zip-2. This chain is CCAAT/enhancer-binding protein homolog 2, found in Caenorhabditis elegans.